The chain runs to 118 residues: Large ribosomal subunit protein bL19 (118 aa).

Belongs to the bacterial ribosomal protein bL19 family.

Its function is as follows. This protein is located at the 30S-50S ribosomal subunit interface and may play a role in the structure and function of the aminoacyl-tRNA binding site. In Dictyoglomus turgidum (strain DSM 6724 / Z-1310), this protein is Large ribosomal subunit protein bL19.